Here is a 211-residue protein sequence, read N- to C-terminus: Imidazole glycerol phosphate synthase subunit HisH (211 aa).

Positions 3–211 (VVAVIDYEMG…VSQVREKIAA (209 aa)) constitute a Glutamine amidotransferase type-1 domain. Residue cysteine 81 is the Nucleophile of the active site. Residues histidine 186 and glutamate 188 contribute to the active site.

In terms of assembly, heterodimer of HisH and HisF.

The protein localises to the cytoplasm. The catalysed reaction is 5-[(5-phospho-1-deoxy-D-ribulos-1-ylimino)methylamino]-1-(5-phospho-beta-D-ribosyl)imidazole-4-carboxamide + L-glutamine = D-erythro-1-(imidazol-4-yl)glycerol 3-phosphate + 5-amino-1-(5-phospho-beta-D-ribosyl)imidazole-4-carboxamide + L-glutamate + H(+). It carries out the reaction L-glutamine + H2O = L-glutamate + NH4(+). It participates in amino-acid biosynthesis; L-histidine biosynthesis; L-histidine from 5-phospho-alpha-D-ribose 1-diphosphate: step 5/9. In terms of biological role, IGPS catalyzes the conversion of PRFAR and glutamine to IGP, AICAR and glutamate. The HisH subunit catalyzes the hydrolysis of glutamine to glutamate and ammonia as part of the synthesis of IGP and AICAR. The resulting ammonia molecule is channeled to the active site of HisF. This is Imidazole glycerol phosphate synthase subunit HisH from Nostoc sp. (strain PCC 7120 / SAG 25.82 / UTEX 2576).